Reading from the N-terminus, the 556-residue chain is MYRLLSAVMARAATTGGCAWGCGRRAAHQRAGLPPLGPGWVGGLGLGLGLALGVKLAGGLRGASPAPPAAAPDPEALPQAEPLQAQEQPLAPWSPQTPAPPHTRHFARAIDSSRDLLHRIKDEVGAPGIVVGVSVDGKEVWSEGLGYADVENRVPCKPETVMRIASISKSLTMVAIAKLWEAGKLDLDIPVQHYVPEFPEKEYEGEKVSVTTRLLISHLSGIRHYEKDMKKVKEEKAYKALKMMKEMMESDQEKELKEKGGKSNEKNDFAKAKVEQDNETKGRNSKPCKKKNDFEQGELYLKEKFENSIESLRLFKNDPLFFKPGSQFLYSTFGYTLLAAIVERASGYKYLDYMQKIFHDLDMLTTVQEENEPVIYNRARFYVYNKKKRLVNTPYVDNSYKWAGGGFLSTVGDLLKFGNAMLYGYQVGLFKNANENLLPGYLKPETMLMIWTPVPNTEMSWDKEGKYAMAWGVVEKKQTYGSCRKQRHYASHTGGAVGASSVLLVLPEELDAEALNNKVPPRGIVVSIICNMQSVGLNSTALKIALEFDKDRSDIP.

The N-terminal 117 residues, 1 to 117, are a transit peptide targeting the mitochondrion; that stretch reads MYRLLSAVMA…RAIDSSRDLL (117 aa). Ser166 (acyl-ester intermediate) is an active-site residue. Residues 249–282 are compositionally biased toward basic and acidic residues; that stretch reads ESDQEKELKEKGGKSNEKNDFAKAKVEQDNETKG. The disordered stretch occupies residues 249–290; that stretch reads ESDQEKELKEKGGKSNEKNDFAKAKVEQDNETKGRNSKPCKK. Lys290 and Lys291 each carry N6-succinyllysine. Residues Lys304 and Lys349 each carry the N6-acetyllysine modification.

This sequence belongs to the peptidase S12 family.

Its subcellular location is the mitochondrion. Functionally, mitochondrial serine protease that acts as a regulator of mitochondrial lipid metabolism. Acts by decreasing protein levels of PISD, a mitochondrial enzyme that converts phosphatidylserine (PtdSer) to phosphatidylethanolamine (PtdEtn), thereby affecting mitochondrial lipid metabolism. It is unclear whether it acts directly by mediating proteolysis of PISD or by mediating proteolysis of another lipid metabolism protein. The polypeptide is Serine beta-lactamase-like protein LACTB, mitochondrial (Bos taurus (Bovine)).